Consider the following 218-residue polypeptide: Hypoxanthine-guanine phosphoribosyltransferase (218 aa).

An N-acetylalanine modification is found at Ala-2. Lys-69 is a binding site for GMP. N6-acetyllysine is present on Lys-103. Residue Lys-115 forms a Glycyl lysine isopeptide (Lys-Gly) (interchain with G-Cter in SUMO1); alternate linkage. Lys-115 participates in a covalent cross-link: Glycyl lysine isopeptide (Lys-Gly) (interchain with G-Cter in SUMO2); alternate. GMP contacts are provided by residues Glu-134–Thr-142, Lys-166, Lys-186–Val-188, and Asp-194. The active-site Proton acceptor is Asp-138. A Phosphothreonine modification is found at Thr-142. Asp-194 contributes to the Mg(2+) binding site.

This sequence belongs to the purine/pyrimidine phosphoribosyltransferase family. Homotetramer. Requires Mg(2+) as cofactor.

It is found in the cytoplasm. It carries out the reaction IMP + diphosphate = hypoxanthine + 5-phospho-alpha-D-ribose 1-diphosphate. The catalysed reaction is GMP + diphosphate = guanine + 5-phospho-alpha-D-ribose 1-diphosphate. It participates in purine metabolism; IMP biosynthesis via salvage pathway; IMP from hypoxanthine: step 1/1. Its function is as follows. Converts guanine to guanosine monophosphate, and hypoxanthine to inosine monophosphate. Transfers the 5-phosphoribosyl group from 5-phosphoribosylpyrophosphate onto the purine. Plays a central role in the generation of purine nucleotides through the purine salvage pathway. This chain is Hypoxanthine-guanine phosphoribosyltransferase (HPRT1), found in Cricetulus griseus (Chinese hamster).